A 251-amino-acid chain; its full sequence is Triosephosphate isomerase (251 aa).

2 residues coordinate substrate: Asn-10 and Lys-12. His-95 acts as the Electrophile in catalysis. Glu-167 (proton acceptor) is an active-site residue.

Belongs to the triosephosphate isomerase family. In terms of assembly, homodimer.

It carries out the reaction D-glyceraldehyde 3-phosphate = dihydroxyacetone phosphate. The protein operates within carbohydrate biosynthesis; gluconeogenesis. Its pathway is carbohydrate degradation; glycolysis; D-glyceraldehyde 3-phosphate from glycerone phosphate: step 1/1. The chain is Triosephosphate isomerase (TPI) from Coprinopsis cinerea (strain Okayama-7 / 130 / ATCC MYA-4618 / FGSC 9003) (Inky cap fungus).